Here is a 61-residue protein sequence, read N- to C-terminus: Small ribosomal subunit protein uS14 (61 aa).

Positions 24, 27, 40, and 43 each coordinate Zn(2+).

Belongs to the universal ribosomal protein uS14 family. Zinc-binding uS14 subfamily. In terms of assembly, part of the 30S ribosomal subunit. Contacts proteins S3 and S10. Zn(2+) serves as cofactor.

In terms of biological role, binds 16S rRNA, required for the assembly of 30S particles and may also be responsible for determining the conformation of the 16S rRNA at the A site. The protein is Small ribosomal subunit protein uS14 of Clostridium botulinum (strain 657 / Type Ba4).